The sequence spans 210 residues: uncharacterized protein (210 aa).

The protein resides in the mitochondrion. This is an uncharacterized protein from Schizosaccharomyces pombe (strain 972 / ATCC 24843) (Fission yeast).